The primary structure comprises 100 residues: Probable steroid-binding protein 3 (100 aa).

At methionine 1 the chain carries N-acetylmethionine. The 82-residue stretch at methionine 1 to asparagine 82 folds into the Cytochrome b5 heme-binding domain. Residues methionine 1 to asparagine 82 are sterol-binding.

The protein belongs to the cytochrome b5 family. MAPR subfamily.

Its subcellular location is the nucleus. The sequence is that of Probable steroid-binding protein 3 (MP3) from Arabidopsis thaliana (Mouse-ear cress).